The following is a 215-amino-acid chain: MKFFLDTANVEKIKEFNALGLVDGVTTNPSLIKKEGRDFYEVIKEICSIVDGPVSAEVIALDAEGMVKEARELVKIAENVVVKIPMTKEGMKAVNTLSNEGIKTNVTLIFSANQALLAAKAGASYVSPFVGRLDDVGQDGMFLISEVMQVFGAYGIETEVIVASVRHPIHVLESAKMGADIATIPFDVLDKLFNHPLTDNGIAKFLADWEAHTNR.

The active-site Schiff-base intermediate with substrate is the Lys83.

Belongs to the transaldolase family. Type 3B subfamily.

Its subcellular location is the cytoplasm. It carries out the reaction D-sedoheptulose 7-phosphate + D-glyceraldehyde 3-phosphate = D-erythrose 4-phosphate + beta-D-fructose 6-phosphate. It functions in the pathway carbohydrate degradation; pentose phosphate pathway; D-glyceraldehyde 3-phosphate and beta-D-fructose 6-phosphate from D-ribose 5-phosphate and D-xylulose 5-phosphate (non-oxidative stage): step 2/3. Transaldolase is important for the balance of metabolites in the pentose-phosphate pathway. In Methanococcus maripaludis (strain C5 / ATCC BAA-1333), this protein is Probable transaldolase.